Here is a 260-residue protein sequence, read N- to C-terminus: Vesicle-associated membrane protein/synaptobrevin-binding protein (260 aa).

The Cytoplasmic portion of the chain corresponds to 1–238 (MASHEQALIL…SPAPAAAVRA (238 aa)). One can recognise an MSP domain in the interval 7–125 (ALILEPAGEL…MDTKLRCVFE (119 aa)). The interval 127–177 (PDGSHQAPASDASRATDAGAHFSESALEDPTVASRKTETQSPKRVGAVGSA) is disordered. A coiled-coil region spans residues 172–216 (GAVGSAGEDVKKLQHELKKAQSEITSLKGENSQLKDEGIRLRKVA). A helical; Anchor for type IV membrane protein membrane pass occupies residues 239-259 (FPPVVYVVAAIILGLIIGKFL).

It belongs to the VAMP-associated protein (VAP) (TC 9.B.17) family. In terms of tissue distribution, detected only in the central nervous system and the gill of aplysia.

It is found in the membrane. The protein localises to the synapse. Its subcellular location is the synaptosome. Required for neurotransmitter release. Interacts with VAMP. This chain is Vesicle-associated membrane protein/synaptobrevin-binding protein, found in Aplysia californica (California sea hare).